Here is a 180-residue protein sequence, read N- to C-terminus: Stathmin-3 (180 aa).

S-palmitoyl cysteine attachment occurs at residues Cys22 and Cys24. One can recognise an SLD domain in the interval 38–180; that stretch reads GDMEVKQLDK…NKEQREEMSG (143 aa). Ser50, Ser60, Ser65, Ser68, Ser72, Ser73, and Ser81 each carry phosphoserine. Positions 59–82 are disordered; the sequence is KSPSDLSPESPMLSSPPKKKDTSL. A compositionally biased stretch (low complexity) spans 60–74; sequence SPSDLSPESPMLSSP. Positions 75-179 form a coiled coil; the sequence is PKKKDTSLEE…RNKEQREEMS (105 aa).

This sequence belongs to the stathmin family. As to quaternary structure, interacts with STAT3. Interacts with CLU (secreted form); this interaction may act as an important modulator during neuronal differentiation. N-terminal palmitoylation promotes specific anchoring to the cytosolic leaflet of Golgi membranes and subsequent vesicular trafficking along dendrites and axons. Neuronal Stathmins are substrates for palmitoyltransferases ZDHHC3, ZDHHC7 and ZDHHC15. In terms of tissue distribution, neuron specific.

Its subcellular location is the golgi apparatus. It localises to the cell projection. It is found in the growth cone. The protein resides in the axon. The protein localises to the cytoplasm. Its subcellular location is the cytosol. In terms of biological role, exhibits microtubule-destabilizing activity, which is antagonized by STAT3. In Homo sapiens (Human), this protein is Stathmin-3 (STMN3).